A 95-amino-acid polypeptide reads, in one-letter code: UPF0213 protein YPA_2977 (95 aa).

Positions 4–79 constitute a GIY-YIG domain; sequence SLWHLYLLRT…KQLSKQQKEK (76 aa).

The protein belongs to the UPF0213 family.

The polypeptide is UPF0213 protein YPA_2977 (Yersinia pestis bv. Antiqua (strain Antiqua)).